The sequence spans 765 residues: Myotubularin-related protein 10-A (765 aa).

Residues 209–650 (FETYSDWDRE…THIKLWKLCY (442 aa)) form the Myotubularin phosphatase domain.

This sequence belongs to the protein-tyrosine phosphatase family. Non-receptor class myotubularin subfamily.

This is Myotubularin-related protein 10-A (mtmr10-a) from Xenopus laevis (African clawed frog).